A 345-amino-acid chain; its full sequence is Large ribosomal subunit protein uL4 (345 aa).

The residue at position 2 (Ala2) is an N-acetylalanine.

The protein belongs to the universal ribosomal protein uL4 family.

This Caenorhabditis elegans protein is Large ribosomal subunit protein uL4 (rpl-4).